A 185-amino-acid polypeptide reads, in one-letter code: Ribosome-recycling factor (185 aa).

The tract at residues 163 to 185 (LTNEATKKIDAISKDKEKEITEG) is disordered. Residues 167 to 185 (ATKKIDAISKDKEKEITEG) show a composition bias toward basic and acidic residues.

Belongs to the RRF family.

Its subcellular location is the cytoplasm. Its function is as follows. Responsible for the release of ribosomes from messenger RNA at the termination of protein biosynthesis. May increase the efficiency of translation by recycling ribosomes from one round of translation to another. The chain is Ribosome-recycling factor from Latilactobacillus sakei subsp. sakei (strain 23K) (Lactobacillus sakei subsp. sakei).